The chain runs to 350 residues: 4-hydroxy-2-oxovalerate aldolase 2 (350 aa).

The 253-residue stretch at 8 to 260 (ITVHDMTLRD…ETGVDVFKIQ (253 aa)) folds into the Pyruvate carboxyltransferase domain. Substrate is bound at residue 16–17 (RD). Asp17 lines the Mn(2+) pocket. Residue His20 is the Proton acceptor of the active site. Positions 170 and 199 each coordinate substrate. Mn(2+) is bound by residues His199 and His201. Tyr290 provides a ligand contact to substrate.

The protein belongs to the 4-hydroxy-2-oxovalerate aldolase family.

It catalyses the reaction (S)-4-hydroxy-2-oxopentanoate = acetaldehyde + pyruvate. In Comamonas testosteroni (Pseudomonas testosteroni), this protein is 4-hydroxy-2-oxovalerate aldolase 2 (tesG).